The primary structure comprises 708 residues: Metabotropic glutamate receptor-like protein L (708 aa).

The first 24 residues, 1–24, serve as a signal peptide directing secretion; the sequence is MKLIIKNLILLLVSCLYFLSNVSC. Asn-21, Asn-235, Asn-310, and Asn-366 each carry an N-linked (GlcNAc...) asparagine glycan. Residues 25-370 are Extracellular-facing; sequence DQEVHMALLL…TTGSINKTFM (346 aa). The chain crosses the membrane as a helical span at residues 371 to 391; sequence AVSILEMAICLIIGIIVIFFF. The Cytoplasmic segment spans residues 392–401; sequence SRNINIIYST. A helical membrane pass occupies residues 402–422; the sequence is IPYCLTILLGASLIAVAIFLW. Residues 423-435 are Extracellular-facing; it reads NLRDLNTQICTSK. A helical transmembrane segment spans residues 436–456; it reads IWMASLGYNVLIGFIIIKSSL. The Cytoplasmic portion of the chain corresponds to 457–479; it reads IYFKFKEMVKSKNEKISPIPFGR. The helical transmembrane segment at 480 to 500 threads the bilayer; that stretch reads IVLWFVPLLIIDCVLLIIYST. Residues 501 to 531 lie on the Extracellular side of the membrane; it reads SGNPGKIDSLGLDGIGRYEYTQNCVNNLTGD. Asn-527 carries an N-linked (GlcNAc...) asparagine glycan. The chain crosses the membrane as a helical span at residues 532-552; that stretch reads IILYIILVFHGLQLLYGCVIA. Over 553-568 the chain is Cytoplasmic; that stretch reads WKTRVIDLEEFIEAHD. Residues 569–589 traverse the membrane as a helical segment; it reads FATAIYLITFCSFIIVILMVG. Topologically, residues 590-597 are extracellular; that stretch reads VTSTSNRN. Residues 598–618 form a helical membrane-spanning segment; that stretch reads TIISACAIFSSFSCVLIIFGA. The Cytoplasmic segment spans residues 619 to 708; it reads KFWKIYKPVE…SSRAAAQNDN (90 aa). Residues 638 to 681 are disordered; the sequence is KPQKSYSGSGGSGNSSGSKSKKTSAHSSTSGVKSGTSAPTQTSQ. The span at 669–681 shows a compositional bias: polar residues; the sequence is VKSGTSAPTQTSQ.

It in the N-terminal section; belongs to the BMP lipoprotein family. In the C-terminal section; belongs to the G-protein coupled receptor 3 family. GABA-B receptor subfamily.

It is found in the membrane. The chain is Metabotropic glutamate receptor-like protein L (far1) from Dictyostelium discoideum (Social amoeba).